We begin with the raw amino-acid sequence, 811 residues long: E3 ubiquitin-protein ligase RNF10 (811 aa).

Residues 1–10 (MPLSSPNAAA) are compositionally biased toward polar residues. Residues 1–119 (MPLSSPNAAA…SFNGGRRDEV (119 aa)) form a disordered region. The residue at position 5 (serine 5) is a Phosphoserine. Composition is skewed to low complexity over residues 18-31 (NSGS…SGSS), 78-90 (NNQS…QKSK), and 104-113 (SKLFSSSFNG). Residues 101-185 (GGSSKLFSSS…FNKELFLQAN (85 aa)) form an interaction with MEOX2 region. Residues serine 110 and serine 128 each carry the phosphoserine modification. Residues 225–267 (CPICLYPPTAAKITRCGHIFCWACILHYLSLSEKTWSKCPICY) form an RING-type zinc finger. A compositionally biased stretch (polar residues) spans 653 to 662 (DSALGPTSTE). Disordered regions lie at residues 653 to 672 (DSAL…ISPL), 724 to 761 (DVWP…VPSF), and 776 to 811 (LDTP…VHTK). The segment covering 724-736 (DVWPKTAPKKDEN) has biased composition (basic and acidic residues). Residues 802–811 (LFSTSVVHTK) show a composition bias toward polar residues.

It belongs to the RNF10 family. In terms of assembly, interacts with MEOX2.

It localises to the cytoplasm. It is found in the nucleus. It catalyses the reaction S-ubiquitinyl-[E2 ubiquitin-conjugating enzyme]-L-cysteine + [acceptor protein]-L-lysine = [E2 ubiquitin-conjugating enzyme]-L-cysteine + N(6)-ubiquitinyl-[acceptor protein]-L-lysine.. Its pathway is protein modification; protein ubiquitination. In terms of biological role, E3 ubiquitin-protein ligase that catalyzes monoubiquitination of 40S ribosomal proteins RPS2/us5 and RPS3/us3 in response to ribosome stalling. Part of a ribosome quality control that takes place when ribosomes have stalled during translation initiation (iRQC): RNF10 acts by mediating monoubiquitination of RPS2/us5 and RPS3/us3, promoting their degradation by the proteasome. Also promotes ubiquitination of 40S ribosomal proteins in response to ribosome stalling during translation elongation. The action of RNF10 in iRQC is counteracted by USP10. May also act as a transcriptional factor involved in the regulation of MAG (Myelin-associated glycoprotein) expression. Acts as a regulator of Schwann cell differentiation and myelination. The protein is E3 ubiquitin-protein ligase RNF10 of Homo sapiens (Human).